A 199-amino-acid polypeptide reads, in one-letter code: GTP cyclohydrolase 1 (199 aa).

Residues Cys-89, His-92, and Cys-161 each contribute to the Zn(2+) site.

Belongs to the GTP cyclohydrolase I family. In terms of assembly, homomer.

It carries out the reaction GTP + H2O = 7,8-dihydroneopterin 3'-triphosphate + formate + H(+). Its pathway is cofactor biosynthesis; 7,8-dihydroneopterin triphosphate biosynthesis; 7,8-dihydroneopterin triphosphate from GTP: step 1/1. The protein is GTP cyclohydrolase 1 of Bifidobacterium longum (strain DJO10A).